The sequence spans 316 residues: MAFSDFAAICSKTPLPLCSVIKSKTHLILSNSTIIHDFDPLNLNVGVLPRCYARSIDLANTVIFDVGNAFINIGALGVILIILYNIRQKYTAIGRSEYLYFFQLTLLLIIFTLVVDCGVSPPGSGSYPYFVAIQIGLAGACCWALLIIGFLGFNLWEDGTTKSMLLVRGTSMLGFIANFLASILTFKAWITDHKVATMNASGMIVVVYIINAIFLFVFVICQLLVSLLVVRNLWVTGAIFLGLFFFVAGQVLVYAFSTQICEGFKHYLDGLFFGSICNVFTLMMVYKTWDMTTDDDLEFGVSVSKDGDVVYDNGFM.

Transmembrane regions (helical) follow at residues V62–I82, L99–V119, F130–F150, T170–I190, A200–I220, L233–V253, and H266–Y286.

This sequence belongs to the CHS7 family. Interacts with CHS3.

The protein resides in the endoplasmic reticulum membrane. In terms of biological role, chaperone required for the export of the chitin synthase CHS3 from the endoplasmic reticulum. In Saccharomyces cerevisiae (strain ATCC 204508 / S288c) (Baker's yeast), this protein is Chitin synthase export chaperone (CHS7).